The sequence spans 326 residues: MTMSQMNQDAEGYFRVWKPEEASPGHQESPEELDSGRMCGHLCRLSPNEPMAQSLVRHEHYLAHRVNIQEGQRIIDLGCGIGNPARSIARFTGANITGLNINAQQLRQARQLTQEAGLSYQVNFVEQNFLKIEFADDTFDGAYAIESTCYAPDLVEVYSEIFRVLKPGARFGVYEAVLTDKYDDNNPMHREVKTNIERGGGLARIHTSAEAIAAMKAVGFEVLAIDDLGARPDQIPWETQLSDPFLEKQGLLSFALLSVFFAARAMPLINRGLQAVVGKLEQMTVFPAGSQKVVDLVVTILDGMYRGGELGIFSPMFLIVARKPEA.

The protein belongs to the class I-like SAM-binding methyltransferase superfamily. Erg6/SMT family.

Its pathway is alkaloid biosynthesis. In terms of biological role, methyltransferase; part of the gene cluster that mediates the biosynthesis of paraherquamide, a fungal indole alkaloid that belongs to a family of natural products containing a characteristic bicyclo[2.2.2]diazaoctane core. The first steps in the biosynthesis of paraherquamide is the production of the beta-methyl-proline precursor from L-isoleucine. They require oxidation of a terminally hydroxylated L-isoleucine to the corresponding aldehyde by enzymes which have still to be identified. Spontaneous cyclization and dehydration would yield the 4-methyl pyrolline-5-carboxylic acid, which is then reduced by the pyrroline-5-carboxylate reductase phqD leading to the beta-methyl-proline precursor. The next step of paraherquamide biosynthesis involves coupling of beta-methyl-proline and L-tryptophan by the bimodular NRPS phqB, to produce a monooxopiperazine intermediate. The reductase (R) domain of phqB utilizes NADPH for hydride transfer to reduce the thioester bond of the T domain-tethered linear dipeptide to a hemithioaminal intermediate, which spontaneously cleaves the C-S bond to release the aldehyde product. This compound undergoes spontaneous cyclization and dehydration to give a dienamine which is reverse prenylated at C-2 by the reverse prenyltransferase phqJ. The other prenyltransferase present in the cluster, phqI may be a redundant gene in the pathway. During biosynthetic assembly, the key step to produce the polycyclic core is catalyzed by the bifunctional reductase and intramolecular [4+2] Diels-Alderase, phqE, resulting in formation of the [2.2.2] diazaoctane intermediate preparaherquamide. Following formation of preparaherquamide, an indole 2,3-epoxidation-initiated pinacol-like rearrangement is catalyzed by the phqK FAD-dependent monooxygenase. The prenyltransferase phqA, the cytochrome P450 monooxygenase phqL, and the FAD-linked oxidoreductase phqH (or the cytochrome P450 monooxygenase phqM), are proposed to be involved in the formation of the pyran ring. The FAD-dependent monooxygenase phqK is likely responsible for generation of the spiro-oxindole, and the N-methylation is likely mediated by the phqN methyltransferase leading to the isolable natural product paraherquamide F. However, the order of these biosynthetic steps has still to be determined. In late-stage paraherquamide biosynthesis, the third P450 monooxygenase, phqO, is probably responsible for the C-14 hydroxylation, transforming paraherquamide F to paraherquamide G, and paraherquamide E to the final product paraherquamide A. The expansion from the 6-membered ring pyran (in paraherquamides F and G) to the 7-membered dioxepin ring (in paraherquamides A and E) represents a poorly understood but intriguing process that probably involves the 2-oxoglutarate-dependent dioxygenase phqC. Finally, the remaining members of the paraherquamide cluster, including phqI as well as phqM (or phqH), do not have a clearly prescribed role and appear to be redundant. This chain is Methyltransferase phqN, found in Penicillium fellutanum.